Here is a 150-residue protein sequence, read N- to C-terminus: 3-dehydroquinate dehydratase (150 aa).

The active-site Proton acceptor is the Tyr26. 3 residues coordinate substrate: Asn77, His83, and Asp90. The Proton donor role is filled by His103. Substrate-binding positions include Leu104–Ser105 and Arg114.

Belongs to the type-II 3-dehydroquinase family. As to quaternary structure, homododecamer.

The catalysed reaction is 3-dehydroquinate = 3-dehydroshikimate + H2O. It functions in the pathway metabolic intermediate biosynthesis; chorismate biosynthesis; chorismate from D-erythrose 4-phosphate and phosphoenolpyruvate: step 3/7. In terms of biological role, catalyzes a trans-dehydration via an enolate intermediate. The sequence is that of 3-dehydroquinate dehydratase from Mannheimia succiniciproducens (strain KCTC 0769BP / MBEL55E).